Consider the following 145-residue polypeptide: Mini-ribonuclease 3 (145 aa).

Aspartate 27 is a catalytic residue.

This sequence belongs to the MrnC RNase family. Homodimer. Mg(2+) serves as cofactor.

It is found in the cytoplasm. In terms of biological role, involved in correct processing of both the 5' and 3' ends of 23S rRNA precursor. Processes 30S rRNA precursor transcript even in absence of ribonuclease 3 (Rnc); Rnc processes 30S rRNA into smaller rRNA precursors. The chain is Mini-ribonuclease 3 from Kosmotoga olearia (strain ATCC BAA-1733 / DSM 21960 / TBF 19.5.1).